We begin with the raw amino-acid sequence, 83 residues long: Alpha-neurotoxin NTX-2 (83 aa).

An N-terminal signal peptide occupies residues 1–21; the sequence is MKTLLLTLLVVTIVCLDLGYT. Intrachain disulfides connect cysteine 24–cysteine 45, cysteine 38–cysteine 62, cysteine 64–cysteine 75, and cysteine 76–cysteine 81.

This sequence belongs to the three-finger toxin family. Short-chain subfamily. Type I alpha-neurotoxin sub-subfamily. In terms of tissue distribution, expressed by the venom gland.

It is found in the secreted. Binds to muscle nicotinic acetylcholine receptor (nAChR) and inhibit acetylcholine from binding to the receptor, thereby impairing neuromuscular transmission. This Naja sputatrix (Malayan spitting cobra) protein is Alpha-neurotoxin NTX-2.